The chain runs to 204 residues: MIIYEESASDYYNKNDRLLYGIIEIAESTIVTGSNIISDLENQGSQLQSIHYNLEHIDSDIQIANDKMDHVESCLPSVRKTARKSFKKISKKLFKKKLVSKNSRLDSGVQNSEIQNNSKIQNNSEIQDNFANNFLDNPPDNSRHFSEDNIEKLHNIVCVLEKQANDISNILDEQNNTLEIIHNKIISDEIAIKKITRRIKHTQS.

2 t-SNARE coiled-coil homology domains span residues 9 to 71 (SDYY…MDHV) and 140 to 202 (DNSR…IKHT). Residues 159 to 181 (VLEKQANDISNILDEQNNTLEII) adopt a coiled-coil conformation.

The protein is Putative t-SNARE coiled-coil homology domain-containing protein L657 of Acanthamoeba polyphaga (Amoeba).